The sequence spans 123 residues: Large ribosomal subunit protein eL8 (123 aa).

Belongs to the eukaryotic ribosomal protein eL8 family. As to quaternary structure, may be present in up to 3 copies per 70S ribosome. Part of the 50S ribosomal subunit, where it binds 23S rRNA at its canonical site near the L1 stalk, as well as a possible second 50S binding site near helix 25 and a possible third site on the beak of the 30S subunit. Component of box C/D small ribonucleoprotein (sRNP) particles that contain rpl7ae, FlpA and nop5, plus a guide RNA. These sRNP particles form homodimers, giving rise to an asymmetric holoenzyme. Probably part of the RNase P complex.

It is found in the cytoplasm. Multifunctional RNA-binding protein that recognizes the K-turn motif in ribosomal RNA, the RNA component of RNase P, box H/ACA, box C/D and box C'/D' sRNAs. Component of the 70S ribosome. Component of a box C/D small ribonucleoprotein (sRNP) particle that is involved in pre-rRNA and tRNA processing. Utilizes the methyl donor S-adenosyl-L-methionine to catalyze the site-specific 2'-hydroxyl methylation of ribose moieties in rRNA and tRNA. Site specificity is provided by a guide RNA that base pairs with the substrate. Methylation occurs at a characteristic distance from the sequence involved in base pairing with the guide RNA. This Pyrococcus furiosus (strain ATCC 43587 / DSM 3638 / JCM 8422 / Vc1) protein is Large ribosomal subunit protein eL8.